A 460-amino-acid polypeptide reads, in one-letter code: 25S rRNA (cytosine-C(5))-methyltransferase rcm1 (460 aa).

Residues 223 to 229, glutamate 246, aspartate 273, and aspartate 293 each bind S-adenosyl-L-methionine; that span reads CAAPGNK. Residue cysteine 350 is the Nucleophile of the active site. The span at 430–439 shows a compositional bias: basic and acidic residues; it reads KMYKNDDDTK. The disordered stretch occupies residues 430–460; it reads KMYKNDDDTKKRKRKKKKKEVKKKARIQGEE. Positions 440–460 are enriched in basic residues; sequence KRKRKKKKKEVKKKARIQGEE.

The protein belongs to the class I-like SAM-binding methyltransferase superfamily. RsmB/NOP family. As to quaternary structure, interacts with trm112.

It localises to the nucleus. Its subcellular location is the nucleolus. The catalysed reaction is a cytidine in 25S rRNA + S-adenosyl-L-methionine = a 5-methylcytidine in 25S rRNA + S-adenosyl-L-homocysteine + H(+). S-adenosyl-L-methionine-dependent methyltransferase that specifically methylates the C(5) position of a cytosine in 25S rRNA. This chain is 25S rRNA (cytosine-C(5))-methyltransferase rcm1 (rcm1), found in Schizosaccharomyces pombe (strain 972 / ATCC 24843) (Fission yeast).